The chain runs to 129 residues: Small ribosomal subunit protein uS11 (129 aa).

The protein belongs to the universal ribosomal protein uS11 family. In terms of assembly, part of the 30S ribosomal subunit.

Located on the platform of the 30S subunit. The sequence is that of Small ribosomal subunit protein uS11 from Haloarcula marismortui (strain ATCC 43049 / DSM 3752 / JCM 8966 / VKM B-1809) (Halobacterium marismortui).